Consider the following 165-residue polypeptide: Mediator of RNA polymerase II transcription subunit 10 (165 aa).

2 disordered regions span residues 54–81 and 143–165; these read SLHT…DPAL and LRGE…RERG. Over residues 62–77 the composition is skewed to polar residues; sequence TASTTAPNQYQSTNPN.

The protein belongs to the Mediator complex subunit 10 family. In terms of assembly, component of the Mediator complex.

Its subcellular location is the nucleus. Functionally, component of the Mediator complex, a coactivator involved in the regulated transcription of nearly all RNA polymerase II-dependent genes. Mediator functions as a bridge to convey information from gene-specific regulatory proteins to the basal RNA polymerase II transcription machinery. Mediator is recruited to promoters by direct interactions with regulatory proteins and serves as a scaffold for the assembly of a functional preinitiation complex with RNA polymerase II and the general transcription factors. The polypeptide is Mediator of RNA polymerase II transcription subunit 10 (nut2) (Emericella nidulans (strain FGSC A4 / ATCC 38163 / CBS 112.46 / NRRL 194 / M139) (Aspergillus nidulans)).